Reading from the N-terminus, the 179-residue chain is Ribulose bisphosphate carboxylase small subunit, chloroplastic 3 (179 aa).

The transit peptide at 1–58 (MASSATMLSSVATAARAAPAQASMVAPFVGLKSASAFPVTQKPATGLSTLPSNGGRVQ) directs the protein to the chloroplast.

It belongs to the RuBisCO small chain family. In terms of assembly, heterohexadecamer of 8 large and 8 small subunits.

It is found in the plastid. The protein resides in the chloroplast. Its function is as follows. RuBisCO catalyzes two reactions: the carboxylation of D-ribulose 1,5-bisphosphate, the primary event in carbon dioxide fixation, as well as the oxidative fragmentation of the pentose substrate. Both reactions occur simultaneously and in competition at the same active site. Although the small subunit is not catalytic it is essential for maximal activity. The sequence is that of Ribulose bisphosphate carboxylase small subunit, chloroplastic 3 from Fritillaria agrestis (Stinkbells).